Here is a 347-residue protein sequence, read N- to C-terminus: S-adenosylmethionine:tRNA ribosyltransferase-isomerase (347 aa).

Belongs to the QueA family. Monomer.

The protein localises to the cytoplasm. The catalysed reaction is 7-aminomethyl-7-carbaguanosine(34) in tRNA + S-adenosyl-L-methionine = epoxyqueuosine(34) in tRNA + adenine + L-methionine + 2 H(+). The protein operates within tRNA modification; tRNA-queuosine biosynthesis. Transfers and isomerizes the ribose moiety from AdoMet to the 7-aminomethyl group of 7-deazaguanine (preQ1-tRNA) to give epoxyqueuosine (oQ-tRNA). The polypeptide is S-adenosylmethionine:tRNA ribosyltransferase-isomerase (Bordetella parapertussis (strain 12822 / ATCC BAA-587 / NCTC 13253)).